Consider the following 324-residue polypeptide: NADH-ubiquinone oxidoreductase chain 1 (324 aa).

8 helical membrane passes run 9-29 (LINP…LTLI), 75-95 (FLFL…WAPM), 106-126 (LGIL…LGSG), 146-166 (ISYE…SGGY), 177-197 (SIWL…STLA), 228-248 (LFFL…AVLF), 259-279 (ELTT…FLWV), and 299-319 (FLPL…ALAG).

It belongs to the complex I subunit 1 family.

It localises to the mitochondrion inner membrane. It catalyses the reaction a ubiquinone + NADH + 5 H(+)(in) = a ubiquinol + NAD(+) + 4 H(+)(out). Core subunit of the mitochondrial membrane respiratory chain NADH dehydrogenase (Complex I) that is believed to belong to the minimal assembly required for catalysis. Complex I functions in the transfer of electrons from NADH to the respiratory chain. The immediate electron acceptor for the enzyme is believed to be ubiquinone. The protein is NADH-ubiquinone oxidoreductase chain 1 (MT-ND1) of Cyprinus carpio (Common carp).